A 201-amino-acid polypeptide reads, in one-letter code: 3-mercaptopropionate dioxygenase (201 aa).

3 residues coordinate Fe cation: His89, His91, and His142.

Belongs to the cysteine dioxygenase family. In terms of assembly, forms homodimer in the crystal; however, there is no evidence that the dimer exists under physiological conditions or has biological significance. The cofactor is Fe(2+).

The enzyme catalyses 3-sulfanylpropanoate + O2 = 3-sulfinopropanoate + H(+). In terms of biological role, thiol dioxygenase that catalyzes the dioxygenation of 3-mercaptopropionate (3-MPA) to 3-sulfinopropionate (3-SPA). To a lesser extent (40-fold lower efficiency), is also able to oxidize cysteine to cysteine sulfinate (CSA). Cannot use N-acetyl-L-cysteine, homocysteine, and cysteamine as substrates. The physiological role of this enzyme is unclear. This chain is 3-mercaptopropionate dioxygenase, found in Pseudomonas aeruginosa (strain ATCC 15692 / DSM 22644 / CIP 104116 / JCM 14847 / LMG 12228 / 1C / PRS 101 / PAO1).